The chain runs to 366 residues: Tetraacyldisaccharide 4'-kinase (366 aa).

Residue 65 to 72 coordinates ATP; sequence TVGGTGKT. Positions 343–366 are disordered; the sequence is AKSTPASGGATGLNKEHQDGQPAA. Positions 356 to 366 are enriched in basic and acidic residues; that stretch reads NKEHQDGQPAA.

This sequence belongs to the LpxK family.

It catalyses the reaction a lipid A disaccharide + ATP = a lipid IVA + ADP + H(+). The protein operates within glycolipid biosynthesis; lipid IV(A) biosynthesis; lipid IV(A) from (3R)-3-hydroxytetradecanoyl-[acyl-carrier-protein] and UDP-N-acetyl-alpha-D-glucosamine: step 6/6. In terms of biological role, transfers the gamma-phosphate of ATP to the 4'-position of a tetraacyldisaccharide 1-phosphate intermediate (termed DS-1-P) to form tetraacyldisaccharide 1,4'-bis-phosphate (lipid IVA). The polypeptide is Tetraacyldisaccharide 4'-kinase (Cupriavidus pinatubonensis (strain JMP 134 / LMG 1197) (Cupriavidus necator (strain JMP 134))).